The primary structure comprises 423 residues: Imidazolonepropionase (423 aa).

The Fe(3+) site is built by H87 and H89. Zn(2+) contacts are provided by H87 and H89. Positions 96, 159, and 192 each coordinate 4-imidazolone-5-propanoate. Y159 provides a ligand contact to N-formimidoyl-L-glutamate. H257 provides a ligand contact to Fe(3+). Residue H257 coordinates Zn(2+). E260 contacts 4-imidazolone-5-propanoate. D331 contacts Fe(3+). D331 is a binding site for Zn(2+). Residues N333 and G335 each coordinate N-formimidoyl-L-glutamate. 4-imidazolone-5-propanoate is bound at residue S336.

The protein belongs to the metallo-dependent hydrolases superfamily. HutI family. It depends on Zn(2+) as a cofactor. Fe(3+) serves as cofactor.

Its subcellular location is the cytoplasm. The enzyme catalyses 4-imidazolone-5-propanoate + H2O = N-formimidoyl-L-glutamate. It participates in amino-acid degradation; L-histidine degradation into L-glutamate; N-formimidoyl-L-glutamate from L-histidine: step 3/3. In terms of biological role, catalyzes the hydrolytic cleavage of the carbon-nitrogen bond in imidazolone-5-propanoate to yield N-formimidoyl-L-glutamate. It is the third step in the universal histidine degradation pathway. In Porphyromonas gingivalis (strain ATCC BAA-308 / W83), this protein is Imidazolonepropionase.